Here is a 743-residue protein sequence, read N- to C-terminus: Dolichyl-phosphate-mannose--protein mannosyltransferase 5 (743 aa).

Residues 1–46 are Lumenal-facing; that stretch reads MNKEHLLKVDPIPDVTIKRGPLRSFLITKPCDNLSSLRTVTSSKEK. Asn33 carries N-linked (GlcNAc...) asparagine glycosylation. A helical transmembrane segment spans residues 47–67; sequence LLVGCLLIFTAIVRLHNISLP. Topologically, residues 68 to 129 are cytoplasmic; that stretch reads NSVVFGENEV…IGTEYTANVP (62 aa). Residues 130 to 150 traverse the membrane as a helical segment; it reads YVAMRFFSATLGIVSVLVLYL. Residues 151–158 are Lumenal-facing; that stretch reads TLRVSGVK. Residues 159–179 form a helical membrane-spanning segment; it reads IAVAAICAVCFAIENSFVTLS. Residue Arg180 is a topological domain, cytoplasmic. The helical transmembrane segment at 181–201 threads the bilayer; the sequence is FTLIEGPFVFFMACAVYFFRR. Over 202-231 the chain is Lumenal; it reads SELYLPNSCKANKSLLAASIALGFAVSSKW. Residue Asn213 is glycosylated (N-linked (GlcNAc...) asparagine). A helical transmembrane segment spans residues 232–252; that stretch reads AGLFTIAWAGIIVLWRVWFMI. The Cytoplasmic portion of the chain corresponds to 253–264; it reads GDLSRPIGSSIK. A helical transmembrane segment spans residues 265 to 285; the sequence is YMAFQFTCLLAIPAFIYFLIF. Residues 286–583 lie on the Lumenal side of the membrane; it reads SVHIKTLNVN…GREVYFLGNA (298 aa). The MIR 1 domain occupies 320–374; it reads VAEVAVGSAVSLNHVGTAGGYLHSHLHNYPAGSMQQQVTLYPHIDQNNKWIIELA. 2 N-linked (GlcNAc...) asparagine glycosylation sites follow: Asn380 and Asn386. MIR domains are found at residues 384-444 and 454-510; these read FQNL…IEID and QEHI…IEEN. A helical transmembrane segment spans residues 584–604; that stretch reads VLWWSVTAFICTFIIGVAVEL. Over 605–623 the chain is Cytoplasmic; sequence LAWKLGVNILRDKHIINFH. A helical membrane pass occupies residues 624-644; it reads YQVFQYLLGFAAHYFPYFFVG. The Lumenal segment spans residues 645 to 646; that stretch reads QK. The chain crosses the membrane as a helical span at residues 647 to 667; the sequence is LFLYDYLPAYYFGILAFGHAL. Topologically, residues 668 to 683 are cytoplasmic; sequence DLISTYISNKRNNTGY. The helical transmembrane segment at 684–704 threads the bilayer; that stretch reads IVVAIFMVVCFYFFSEHSPLI. The Lumenal segment spans residues 705–743; it reads YATGWSSNLCKRSKWLGSWDFYCNSLLLSDSHYELNAES.

This sequence belongs to the glycosyltransferase 39 family. PMT3 and PMT5 form a functional heterodimer. Also forms a minor complex with PMT2.

The protein localises to the endoplasmic reticulum membrane. It carries out the reaction a di-trans,poly-cis-dolichyl beta-D-mannosyl phosphate + L-seryl-[protein] = 3-O-(alpha-D-mannosyl)-L-seryl-[protein] + a di-trans,poly-cis-dolichyl phosphate + H(+). The catalysed reaction is a di-trans,poly-cis-dolichyl beta-D-mannosyl phosphate + L-threonyl-[protein] = 3-O-(alpha-D-mannosyl)-L-threonyl-[protein] + a di-trans,poly-cis-dolichyl phosphate + H(+). It participates in protein modification; protein glycosylation. Functionally, protein O-mannosyltransferase involved in O-glycosylation which is essential for cell wall rigidity. Forms a heterodimeric complex with PMT3 and more rarely with PMT2 to transfer mannose from Dol-P-mannose to Ser or Thr residues on proteins. This chain is Dolichyl-phosphate-mannose--protein mannosyltransferase 5, found in Saccharomyces cerevisiae (strain ATCC 204508 / S288c) (Baker's yeast).